Reading from the N-terminus, the 362-residue chain is Methylthioribose-1-phosphate isomerase (362 aa).

Aspartate 252 functions as the Proton donor in the catalytic mechanism.

It belongs to the eIF-2B alpha/beta/delta subunits family. MtnA subfamily.

The protein resides in the cytoplasm. The protein localises to the nucleus. The catalysed reaction is 5-(methylsulfanyl)-alpha-D-ribose 1-phosphate = 5-(methylsulfanyl)-D-ribulose 1-phosphate. It functions in the pathway amino-acid biosynthesis; L-methionine biosynthesis via salvage pathway; L-methionine from S-methyl-5-thio-alpha-D-ribose 1-phosphate: step 1/6. Its function is as follows. Catalyzes the interconversion of methylthioribose-1-phosphate (MTR-1-P) into methylthioribulose-1-phosphate (MTRu-1-P). The chain is Methylthioribose-1-phosphate isomerase from Drosophila persimilis (Fruit fly).